A 554-amino-acid chain; its full sequence is Glucose-6-phosphate isomerase (554 aa).

The active-site Proton donor is the Glu-359. Active-site residues include His-390 and Lys-518.

This sequence belongs to the GPI family.

The protein resides in the cytoplasm. The enzyme catalyses alpha-D-glucose 6-phosphate = beta-D-fructose 6-phosphate. The protein operates within carbohydrate biosynthesis; gluconeogenesis. It functions in the pathway carbohydrate degradation; glycolysis; D-glyceraldehyde 3-phosphate and glycerone phosphate from D-glucose: step 2/4. In terms of biological role, catalyzes the reversible isomerization of glucose-6-phosphate to fructose-6-phosphate. This is Glucose-6-phosphate isomerase from Pseudomonas entomophila (strain L48).